Reading from the N-terminus, the 471-residue chain is Mixed lineage kinase domain-like protein (471 aa).

The N-terminal bundle and brace (NBB); mediates INSP6 binding stretch occupies residues 1-149 (MENLKHIITL…DADEDRRAFQ (149 aa)). Positions 55–84 (SEKLTTAMNRFKAALEEANGEIEKFSNRSN) form a coiled coil. Phosphoserine is present on serine 125. Residues 139-180 (QDADEDRRAFQMLRRDNEKIEASLRRLEINMKEIKETLRQYL) are a coiled coil. The Protein kinase domain occupies 194-469 (KEIKKEQLSG…DEILKKLSTF (276 aa)). Residues 209–217 (LRENEVSTL) and lysine 230 contribute to the ATP site. The residue at position 357 (threonine 357) is a Phosphothreonine; by RIPK3. Phosphoserine; by RIPK3 occurs at positions 358 and 360.

Belongs to the protein kinase superfamily. As to quaternary structure, homooligomer. Homotrimer; forms homotrimers on necroptosis induction. Upon TNF-induced necrosis, forms in complex with PGAM5, RIPK1 and RIPK3. Within this complex, may play a role in the proper targeting of RIPK1-RIPK3 to its downstream effector PGAM5. Interacts with RIPK3; the interaction is direct and promotes its phosphorylation and subsequent activation. In terms of processing, phosphorylation by RIPK3 induces a conformational switch that is required for necroptosis. It also induces homotrimerization and localization to the plasma membrane.

It is found in the cytoplasm. It localises to the cell membrane. Its subcellular location is the nucleus. Activated via binding to highly phosphorylated inositol phosphates such as inositolhexakisphosphate (InsP6) which mediates the release of an N-terminal auto-inhibitory region. Activation requires not only RIPK3-dependent phosphorylation but also binding to highly phosphorylated inositol phosphates. Inhibited by necrosulfonamide, a specific inhibitor of necroptosis that targets Cys-86. Its function is as follows. Pseudokinase that plays a key role in TNF-induced necroptosis, a programmed cell death process. Does not have protein kinase activity. Activated following phosphorylation by RIPK3, leading to homotrimerization, localization to the plasma membrane and execution of programmed necrosis characterized by calcium influx and plasma membrane damage. In addition to TNF-induced necroptosis, necroptosis can also take place in the nucleus in response to orthomyxoviruses infection: following activation by ZBP1, MLKL is phosphorylated by RIPK3 in the nucleus, triggering disruption of the nuclear envelope and leakage of cellular DNA into the cytosol.following ZBP1 activation, which senses double-stranded Z-RNA structures, nuclear RIPK3 catalyzes phosphorylation and activation of MLKL, promoting disruption of the nuclear envelope and leakage of cellular DNA into the cytosol. Binds to highly phosphorylated inositol phosphates such as inositolhexakisphosphate (InsP6) which is essential for its necroptotic function. The polypeptide is Mixed lineage kinase domain-like protein (Homo sapiens (Human)).